The sequence spans 138 residues: Cysteine desulfuration protein SufE (138 aa).

Residue C51 is the Cysteine persulfide intermediate of the active site.

The protein belongs to the SufE family. Homodimer. Interacts with SufS.

Its subcellular location is the cytoplasm. The protein operates within cofactor biosynthesis; iron-sulfur cluster biosynthesis. In terms of biological role, participates in cysteine desulfuration mediated by SufS. Cysteine desulfuration mobilizes sulfur from L-cysteine to yield L-alanine and constitutes an essential step in sulfur metabolism for biosynthesis of a variety of sulfur-containing biomolecules. Functions as a sulfur acceptor for SufS, by mediating the direct transfer of the sulfur atom from the S-sulfanylcysteine of SufS, an intermediate product of cysteine desulfuration process. This chain is Cysteine desulfuration protein SufE, found in Klebsiella pneumoniae (strain 342).